Here is a 554-residue protein sequence, read N- to C-terminus: Glucose-6-phosphate isomerase (554 aa).

The Proton donor role is filled by Glu-359. Catalysis depends on residues His-390 and Lys-518.

The protein belongs to the GPI family.

It localises to the cytoplasm. It catalyses the reaction alpha-D-glucose 6-phosphate = beta-D-fructose 6-phosphate. It functions in the pathway carbohydrate biosynthesis; gluconeogenesis. Its pathway is carbohydrate degradation; glycolysis; D-glyceraldehyde 3-phosphate and glycerone phosphate from D-glucose: step 2/4. Catalyzes the reversible isomerization of glucose-6-phosphate to fructose-6-phosphate. The protein is Glucose-6-phosphate isomerase of Stutzerimonas stutzeri (strain A1501) (Pseudomonas stutzeri).